We begin with the raw amino-acid sequence, 581 residues long: FAD-dependent monooxygenase DEP4 (581 aa).

Residue 43-46 (VWSK) participates in FAD binding. 54-56 (FAQ) is a binding site for NADP(+). Val108 contacts FAD. NADP(+)-binding positions include 183–202 (VGRS…EGKR), 219–220 (AP), and 351–352 (DI). Met470 contributes to the FAD binding site.

This sequence belongs to the FAD-binding monooxygenase family. Requires FAD as cofactor.

The protein operates within polyketide biosynthesis. Functionally, FAD-dependent monooxygenase; part of the gene cluster that mediates the biosynthesis of depudecin, a highly oxidized eleven-carbon linear polyketide that acts as a histone deacetylase (HDAC) inhibitor and makes a small contribution to pathogenesis. The reducing polyketide synthase DEP5 is the central enzyme in depudecin biosynthesis by yielding the backbone polyketide chain. The monooxygenases DEP2 and DEP4, as well as the uncharacterized protein DEP1, then act as tailoring enzymes to modify the intermediate polyketide chain into depudecin. This is FAD-dependent monooxygenase DEP4 from Alternaria brassicicola (Dark leaf spot agent).